Consider the following 277-residue polypeptide: DNA polymerase epsilon subunit C (277 aa).

Composition is skewed to polar residues over residues 1–16 and 24–39; these read MSSP…SQVA and ETPS…TNTP. Positions 1 to 91 are disordered; it reads MSSPMPQSSL…EEEEEEESLS (91 aa). Over residues 69-89 the composition is skewed to acidic residues; the sequence is ENEDDDEQEEEEEEEEEEEES.

Heterotetramer. Consists of four subunits: POL2, DPB2, DPB3 and DPB4.

Its subcellular location is the nucleus. Its function is as follows. As accessory component of the DNA polymerase epsilon (DNA polymerase II) participates in chromosomal DNA replication. In Debaryomyces hansenii (strain ATCC 36239 / CBS 767 / BCRC 21394 / JCM 1990 / NBRC 0083 / IGC 2968) (Yeast), this protein is DNA polymerase epsilon subunit C (DPB3).